We begin with the raw amino-acid sequence, 203 residues long: Holliday junction branch migration complex subunit RuvA (203 aa).

Residues methionine 1–leucine 63 are domain I. The domain II stretch occupies residues serine 64–lysine 142. Residues aspartate 143–glycine 149 form a flexible linker region. A domain III region spans residues isoleucine 150–phenylalanine 203.

This sequence belongs to the RuvA family. Homotetramer. Forms an RuvA(8)-RuvB(12)-Holliday junction (HJ) complex. HJ DNA is sandwiched between 2 RuvA tetramers; dsDNA enters through RuvA and exits via RuvB. An RuvB hexamer assembles on each DNA strand where it exits the tetramer. Each RuvB hexamer is contacted by two RuvA subunits (via domain III) on 2 adjacent RuvB subunits; this complex drives branch migration. In the full resolvosome a probable DNA-RuvA(4)-RuvB(12)-RuvC(2) complex forms which resolves the HJ.

Its subcellular location is the cytoplasm. In terms of biological role, the RuvA-RuvB-RuvC complex processes Holliday junction (HJ) DNA during genetic recombination and DNA repair, while the RuvA-RuvB complex plays an important role in the rescue of blocked DNA replication forks via replication fork reversal (RFR). RuvA specifically binds to HJ cruciform DNA, conferring on it an open structure. The RuvB hexamer acts as an ATP-dependent pump, pulling dsDNA into and through the RuvAB complex. HJ branch migration allows RuvC to scan DNA until it finds its consensus sequence, where it cleaves and resolves the cruciform DNA. This Rickettsia bellii (strain OSU 85-389) protein is Holliday junction branch migration complex subunit RuvA.